The primary structure comprises 206 residues: Small ribosomal subunit protein uS4 (206 aa).

Residues 25–39 (DKLLDRKPNGPGKER) show a composition bias toward basic and acidic residues. Residues 25–49 (DKLLDRKPNGPGKERGARKRGKTSV) are disordered. Residues 95–157 (QRLDNTIYRM…KGIQNLIRHN (63 aa)) enclose the S4 RNA-binding domain.

The protein belongs to the universal ribosomal protein uS4 family. In terms of assembly, part of the 30S ribosomal subunit. Contacts protein S5. The interaction surface between S4 and S5 is involved in control of translational fidelity.

One of the primary rRNA binding proteins, it binds directly to 16S rRNA where it nucleates assembly of the body of the 30S subunit. In terms of biological role, with S5 and S12 plays an important role in translational accuracy. This is Small ribosomal subunit protein uS4 from Treponema denticola (strain ATCC 35405 / DSM 14222 / CIP 103919 / JCM 8153 / KCTC 15104).